The chain runs to 328 residues: 4-hydroxythreonine-4-phosphate dehydrogenase (328 aa).

Substrate is bound by residues histidine 134 and threonine 135. 3 residues coordinate a divalent metal cation: histidine 164, histidine 209, and histidine 265. 3 residues coordinate substrate: lysine 273, asparagine 282, and arginine 291.

Belongs to the PdxA family. Homodimer. Zn(2+) is required as a cofactor. It depends on Mg(2+) as a cofactor. Co(2+) serves as cofactor.

It localises to the cytoplasm. The enzyme catalyses 4-(phosphooxy)-L-threonine + NAD(+) = 3-amino-2-oxopropyl phosphate + CO2 + NADH. It functions in the pathway cofactor biosynthesis; pyridoxine 5'-phosphate biosynthesis; pyridoxine 5'-phosphate from D-erythrose 4-phosphate: step 4/5. Catalyzes the NAD(P)-dependent oxidation of 4-(phosphooxy)-L-threonine (HTP) into 2-amino-3-oxo-4-(phosphooxy)butyric acid which spontaneously decarboxylates to form 3-amino-2-oxopropyl phosphate (AHAP). The sequence is that of 4-hydroxythreonine-4-phosphate dehydrogenase from Vibrio vulnificus (strain YJ016).